Consider the following 485-residue polypeptide: Glutamyl-tRNA(Gln) amidotransferase subunit A (485 aa).

Catalysis depends on charge relay system residues lysine 78 and serine 153. Serine 177 acts as the Acyl-ester intermediate in catalysis.

Belongs to the amidase family. GatA subfamily. In terms of assembly, heterotrimer of A, B and C subunits.

It carries out the reaction L-glutamyl-tRNA(Gln) + L-glutamine + ATP + H2O = L-glutaminyl-tRNA(Gln) + L-glutamate + ADP + phosphate + H(+). Allows the formation of correctly charged Gln-tRNA(Gln) through the transamidation of misacylated Glu-tRNA(Gln) in organisms which lack glutaminyl-tRNA synthetase. The reaction takes place in the presence of glutamine and ATP through an activated gamma-phospho-Glu-tRNA(Gln). This chain is Glutamyl-tRNA(Gln) amidotransferase subunit A, found in Geobacter sp. (strain M21).